Reading from the N-terminus, the 304-residue chain is tRNA pseudouridine synthase B (304 aa).

Asp40 (nucleophile) is an active-site residue.

The protein belongs to the pseudouridine synthase TruB family. Type 1 subfamily.

It carries out the reaction uridine(55) in tRNA = pseudouridine(55) in tRNA. Functionally, responsible for synthesis of pseudouridine from uracil-55 in the psi GC loop of transfer RNAs. This chain is tRNA pseudouridine synthase B, found in Halalkalibacterium halodurans (strain ATCC BAA-125 / DSM 18197 / FERM 7344 / JCM 9153 / C-125) (Bacillus halodurans).